The primary structure comprises 129 residues: Small ribosomal subunit protein uS8 (129 aa).

The protein belongs to the universal ribosomal protein uS8 family. Part of the 30S ribosomal subunit.

Functionally, one of the primary rRNA binding proteins, it binds directly to 16S rRNA central domain where it helps coordinate assembly of the platform of the 30S subunit. The sequence is that of Small ribosomal subunit protein uS8 from Thermoplasma acidophilum (strain ATCC 25905 / DSM 1728 / JCM 9062 / NBRC 15155 / AMRC-C165).